A 362-amino-acid chain; its full sequence is Outer envelope protein 39, chloroplastic (362 aa).

This sequence belongs to the OEP80 (TC 1.B.33.2) family. As to expression, expressed in germinating seeds. Expressed in the vasculature of roots, cotyledons and leaves.

The protein localises to the plastid. It is found in the chloroplast outer membrane. In terms of biological role, beta-barrel pore-forming protein which possesses voltage-dependent channel activity. Required for proper plastid development. Involved in the maintenance of metabolic homeostasis of full-grown plants. This chain is Outer envelope protein 39, chloroplastic, found in Arabidopsis thaliana (Mouse-ear cress).